The primary structure comprises 149 residues: 3-dehydroquinate dehydratase (149 aa).

Tyrosine 26 (proton acceptor) is an active-site residue. Residues asparagine 77, histidine 83, and aspartate 90 each coordinate substrate. Catalysis depends on histidine 103, which acts as the Proton donor. Substrate-binding positions include 104–105 and arginine 114; that span reads LS.

The protein belongs to the type-II 3-dehydroquinase family. In terms of assembly, homododecamer.

It carries out the reaction 3-dehydroquinate = 3-dehydroshikimate + H2O. Its pathway is metabolic intermediate biosynthesis; chorismate biosynthesis; chorismate from D-erythrose 4-phosphate and phosphoenolpyruvate: step 3/7. Catalyzes a trans-dehydration via an enolate intermediate. The polypeptide is 3-dehydroquinate dehydratase (Vibrio vulnificus (strain YJ016)).